The primary structure comprises 1014 residues: 2-oxoglutarate dehydrogenase, mitochondrial (1014 aa).

The N-terminal 30 residues, 1-30 (MLRFVSSQTCRYSSRGLLKTSLLKNASTVK), are a transit peptide targeting the mitochondrion. Thiamine diphosphate contacts are provided by arginine 306, aspartate 406, asparagine 439, and isoleucine 441. Positions 406, 439, and 441 each coordinate Mg(2+).

This sequence belongs to the alpha-ketoglutarate dehydrogenase family. In terms of assembly, component of the 2-oxoglutarate dehydrogenase complex (OGDC), also called alpha-ketoglutarate dehydrogenase (KGDH) complex. The copmplex is composed of the catalytic subunits OGDH (2-oxoglutarate dehydrogenase KGD1; also called E1 subunit), DLST (dihydrolipoamide succinyltransferase KGD2; also called E2 subunit) and DLD (dihydrolipoamide dehydrogenase LPD1; also called E3 subunit), and the assembly factor KGD4. Requires thiamine diphosphate as cofactor. Mg(2+) serves as cofactor.

It is found in the mitochondrion. It localises to the mitochondrion matrix. The protein localises to the mitochondrion nucleoid. It carries out the reaction N(6)-[(R)-lipoyl]-L-lysyl-[protein] + 2-oxoglutarate + H(+) = N(6)-[(R)-S(8)-succinyldihydrolipoyl]-L-lysyl-[protein] + CO2. Its activity is regulated as follows. Catabolite repressed. Its function is as follows. The 2-oxoglutarate dehydrogenase complex catalyzes the overall conversion of 2-oxoglutarate to succinyl-CoA and CO(2). It contains multiple copies of three enzymatic components: 2-oxoglutarate dehydrogenase (E1), dihydrolipoamide succinyltransferase (E2) and lipoamide dehydrogenase (E3). This chain is 2-oxoglutarate dehydrogenase, mitochondrial (KGD1), found in Saccharomyces cerevisiae (strain ATCC 204508 / S288c) (Baker's yeast).